The chain runs to 290 residues: uncharacterized protein (290 aa).

Disordered stretches follow at residues 17–91 (QTIS…EKNS) and 220–259 (DKAS…QMPN). Polar residues predominate over residues 40-50 (NITTHLSTGNL). The span at 66-83 (STKKGKRVSKPGTKKKEK) shows a compositional bias: basic residues. Over residues 233 to 249 (EGEKDGNAEQGKQKEVQ) the composition is skewed to basic and acidic residues.

This is an uncharacterized protein from Saccharomyces cerevisiae (strain ATCC 204508 / S288c) (Baker's yeast).